The following is a 188-amino-acid chain: uncharacterized protein (188 aa).

The protein belongs to the isochorismatase family.

This is an uncharacterized protein from Escherichia coli O157:H7.